The following is an 807-amino-acid chain: SWI/SNF complex subunit SWI3C (807 aa).

The disordered stretch occupies residues 1-74; sequence MPASEDRRGK…DPGLGIGEVV (74 aa). The span at 28–54 shows a compositional bias: acidic residues; it reads EEEDMEEEDEENNNNNNEEMDDVENAD. An SWIRM domain is found at 176 to 274; that stretch reads HVLPMHSDWF…YCATAQSHPG (99 aa). A ZZ-type; degenerate zinc finger spans residues 340–394; the sequence is LCDSHCNHCSRPLPTVYFQSQKKGDILLCCDCFHHGRFVVGHSCLDFVRVDPMKF. Zn(2+)-binding residues include cysteine 345, cysteine 348, cysteine 368, and cysteine 371. The 52-residue stretch at 398-449 folds into the SANT domain; that stretch reads QDGDNWTDQETLLLLEAVELYNENWVQIADHVGSKSKAQCILHFLRLPVEDG. Polar residues-rich tracts occupy residues 458 to 467 and 552 to 569; these read GVTNTENPTN and ENQQ…NGAE. Disordered regions lie at residues 458-487 and 549-571; these read GVTN…SEQG and LDGE…AEAQ. Residues 598-656 adopt a coiled-coil conformation; it reads ADHEEREIQRLSANIVNHQLKRMELKLKQFAEIETLLMKECEQVEKTRQRFSAERARML. Low complexity-rich tracts occupy residues 692–703 and 726–739; these read QHQQQQASATSQ and QQQQ…QQQQ. Disordered regions lie at residues 692–713, 721–740, and 781–807; these read QHQQ…FSNN, HFMA…QQQA, and SINQ…LGLN. Over residues 798–807 the composition is skewed to gly residues; that stretch reads SGSGSGLGLN.

In terms of assembly, heterodimer. Interacts with SWI3A, SWI3B and BRM, but not with BSH. Interacts with MORC6 and SUVH9. As to expression, expressed in roots, stems, leaves, flowers and siliques.

It localises to the nucleus. Functionally, component of a multiprotein complex equivalent of the SWI/SNF complex, an ATP-dependent chromatin-remodeling complex, which is required for the positive and negative regulation of gene expression of a large number of genes. It changes chromatin structure by altering DNA-histone contacts within a nucleosome, leading eventually to a change in nucleosome position, thus facilitating or repressing binding of gene-specific transcription factors. In Arabidopsis thaliana (Mouse-ear cress), this protein is SWI/SNF complex subunit SWI3C (SWI3C).